Here is a 110-residue protein sequence, read N- to C-terminus: Nucleoid-associated protein Ent638_0951 (110 aa).

The protein belongs to the YbaB/EbfC family. As to quaternary structure, homodimer.

The protein localises to the cytoplasm. The protein resides in the nucleoid. Functionally, binds to DNA and alters its conformation. May be involved in regulation of gene expression, nucleoid organization and DNA protection. In Enterobacter sp. (strain 638), this protein is Nucleoid-associated protein Ent638_0951.